The sequence spans 395 residues: Major outer membrane porin, serovar F (395 aa).

An N-terminal signal peptide occupies residues 1–22; sequence MKKLLKSVLVFAALSSASSLQA.

The protein belongs to the chlamydial porin (CP) (TC 1.B.2) family. In terms of assembly, part of a disulfide cross-linked outer membrane complex (COMC) composed of the major outer membrane porin (MOMP), the small cysteine-rich protein (OmcA) and the large cysteine-rich periplasmic protein (OmcB).

It localises to the cell outer membrane. Functionally, in elementary bodies (EBs, the infectious stage, which is able to survive outside the host cell) provides the structural integrity of the outer envelope through disulfide cross-links with the small cysteine-rich protein and the large cysteine-rich periplasmic protein. It has been described in publications as the Sarkosyl-insoluble COMC (Chlamydia outer membrane complex), and serves as the functional equivalent of peptidoglycan. In terms of biological role, permits diffusion of specific solutes through the outer membrane. The sequence is that of Major outer membrane porin, serovar F (ompA) from Chlamydia trachomatis.